Consider the following 219-residue polypeptide: Protein-L-isoaspartate O-methyltransferase (219 aa).

Residue serine 66 is part of the active site.

It belongs to the methyltransferase superfamily. L-isoaspartyl/D-aspartyl protein methyltransferase family.

It is found in the cytoplasm. It carries out the reaction [protein]-L-isoaspartate + S-adenosyl-L-methionine = [protein]-L-isoaspartate alpha-methyl ester + S-adenosyl-L-homocysteine. Its function is as follows. Catalyzes the methyl esterification of L-isoaspartyl residues in peptides and proteins that result from spontaneous decomposition of normal L-aspartyl and L-asparaginyl residues. It plays a role in the repair and/or degradation of damaged proteins. This Xanthobacter autotrophicus (strain ATCC BAA-1158 / Py2) protein is Protein-L-isoaspartate O-methyltransferase.